The following is a 280-amino-acid chain: Pantothenate synthetase (280 aa).

ATP is bound at residue 30–37; sequence MGALHRGH. The active-site Proton donor is H37. Residue Q61 coordinates (R)-pantoate. Q61 provides a ligand contact to beta-alanine. 148–151 is an ATP binding site; sequence GEKD. Q154 provides a ligand contact to (R)-pantoate. Residues V177 and 185-188 contribute to the ATP site; that span reads LSSR.

The protein belongs to the pantothenate synthetase family. Homodimer.

It localises to the cytoplasm. It catalyses the reaction (R)-pantoate + beta-alanine + ATP = (R)-pantothenate + AMP + diphosphate + H(+). Its pathway is cofactor biosynthesis; (R)-pantothenate biosynthesis; (R)-pantothenate from (R)-pantoate and beta-alanine: step 1/1. Its function is as follows. Catalyzes the condensation of pantoate with beta-alanine in an ATP-dependent reaction via a pantoyl-adenylate intermediate. The chain is Pantothenate synthetase from Azobacteroides pseudotrichonymphae genomovar. CFP2.